We begin with the raw amino-acid sequence, 170 residues long: MKRFSTAYLLLGILCSAAVFLIGAPSRALGAEVEHYEPLQVHVQLEKVYLDGDVSIEHKHEKVFSMDDFWAAYAGWTLVEQKKGYVLFRKQMDDISPLSKVNGYIGVSDNGVISTFHGRPEPASEPIQSFFQIDLERLESHMQKNLLKGIPFRTKAEFEDVIEHMKTYSG.

Positions 1–30 are cleaved as a signal peptide; the sequence is MKRFSTAYLLLGILCSAAVFLIGAPSRALG.

In terms of assembly, monomer.

The protein resides in the forespore intermembrane space. Its function is as follows. Inhibits the SpoIVB zymogen from undergoing autocatalytic activation by an unknown mechanism, and in this way plays a role in the sigma-K checkpoint of sporulation. This Bacillus subtilis (strain 168) protein is Protein BofC (bofC).